We begin with the raw amino-acid sequence, 358 residues long: Probable branched-chain-amino-acid aminotransferase (358 aa).

Lys196 carries the post-translational modification N6-(pyridoxal phosphate)lysine.

The protein belongs to the class-IV pyridoxal-phosphate-dependent aminotransferase family. It depends on pyridoxal 5'-phosphate as a cofactor.

It catalyses the reaction L-leucine + 2-oxoglutarate = 4-methyl-2-oxopentanoate + L-glutamate. The catalysed reaction is L-isoleucine + 2-oxoglutarate = (S)-3-methyl-2-oxopentanoate + L-glutamate. It carries out the reaction L-valine + 2-oxoglutarate = 3-methyl-2-oxobutanoate + L-glutamate. It functions in the pathway amino-acid biosynthesis; L-isoleucine biosynthesis; L-isoleucine from 2-oxobutanoate: step 4/4. Its pathway is amino-acid biosynthesis; L-leucine biosynthesis; L-leucine from 3-methyl-2-oxobutanoate: step 4/4. It participates in amino-acid biosynthesis; L-valine biosynthesis; L-valine from pyruvate: step 4/4. In terms of biological role, acts on leucine, isoleucine and valine. This chain is Probable branched-chain-amino-acid aminotransferase (ilvE), found in Staphylococcus aureus (strain MRSA252).